The chain runs to 197 residues: ATP-dependent Clp protease proteolytic subunit (197 aa).

Catalysis depends on serine 98, which acts as the Nucleophile. Histidine 123 is a catalytic residue.

The protein belongs to the peptidase S14 family. Fourteen ClpP subunits assemble into 2 heptameric rings which stack back to back to give a disk-like structure with a central cavity, resembling the structure of eukaryotic proteasomes.

The protein resides in the cytoplasm. It carries out the reaction Hydrolysis of proteins to small peptides in the presence of ATP and magnesium. alpha-casein is the usual test substrate. In the absence of ATP, only oligopeptides shorter than five residues are hydrolyzed (such as succinyl-Leu-Tyr-|-NHMec, and Leu-Tyr-Leu-|-Tyr-Trp, in which cleavage of the -Tyr-|-Leu- and -Tyr-|-Trp bonds also occurs).. In terms of biological role, cleaves peptides in various proteins in a process that requires ATP hydrolysis. Has a chymotrypsin-like activity. Plays a major role in the degradation of misfolded proteins. The sequence is that of ATP-dependent Clp protease proteolytic subunit from Enterococcus faecalis (strain ATCC 700802 / V583).